We begin with the raw amino-acid sequence, 352 residues long: Thiamine-phosphate synthase (352 aa).

The interval 1-128 is unknown; sequence MNPTPSETSL…AAEAAAIRYG (128 aa). The segment at 63 to 85 is disordered; it reads SYKQARSTSTDTGAGLKHPAQLD. The tract at residues 129 to 352 is thiamine-phosphate synthase; it reads LYDLEVTCLN…LLQQLDQATI (224 aa). 4-amino-2-methyl-5-(diphosphooxymethyl)pyrimidine-binding positions include 180-184 and asparagine 212; that span reads QYRCK. 2 residues coordinate Mg(2+): aspartate 213 and aspartate 232. Residues serine 251 and lysine 280 each contribute to the 4-amino-2-methyl-5-(diphosphooxymethyl)pyrimidine site. Glycine 307 is a binding site for 2-[(2R,5Z)-2-carboxy-4-methylthiazol-5(2H)-ylidene]ethyl phosphate.

The protein belongs to the thiamine-phosphate synthase family. The cofactor is Mg(2+).

The enzyme catalyses 2-[(2R,5Z)-2-carboxy-4-methylthiazol-5(2H)-ylidene]ethyl phosphate + 4-amino-2-methyl-5-(diphosphooxymethyl)pyrimidine + 2 H(+) = thiamine phosphate + CO2 + diphosphate. The catalysed reaction is 2-(2-carboxy-4-methylthiazol-5-yl)ethyl phosphate + 4-amino-2-methyl-5-(diphosphooxymethyl)pyrimidine + 2 H(+) = thiamine phosphate + CO2 + diphosphate. It catalyses the reaction 4-methyl-5-(2-phosphooxyethyl)-thiazole + 4-amino-2-methyl-5-(diphosphooxymethyl)pyrimidine + H(+) = thiamine phosphate + diphosphate. The protein operates within cofactor biosynthesis; thiamine diphosphate biosynthesis; thiamine phosphate from 4-amino-2-methyl-5-diphosphomethylpyrimidine and 4-methyl-5-(2-phosphoethyl)-thiazole: step 1/1. Condenses 4-methyl-5-(beta-hydroxyethyl)thiazole monophosphate (THZ-P) and 2-methyl-4-amino-5-hydroxymethyl pyrimidine pyrophosphate (HMP-PP) to form thiamine monophosphate (TMP). The chain is Thiamine-phosphate synthase from Synechococcus sp. (strain CC9605).